We begin with the raw amino-acid sequence, 104 residues long: Large ribosomal subunit protein bL21 (104 aa).

The protein belongs to the bacterial ribosomal protein bL21 family. In terms of assembly, part of the 50S ribosomal subunit. Contacts protein L20.

Its function is as follows. This protein binds to 23S rRNA in the presence of protein L20. The polypeptide is Large ribosomal subunit protein bL21 (Desulfosudis oleivorans (strain DSM 6200 / JCM 39069 / Hxd3) (Desulfococcus oleovorans)).